We begin with the raw amino-acid sequence, 362 residues long: Terpene synthase 3 (362 aa).

Residues 90 to 95 (DDFLER) carry the DDxx(x)D/E motif motif. Positions 239-247 (NDCVSYAKE) match the NDxxSxxxD/E motif motif.

This sequence belongs to the terpene synthase family.

The catalysed reaction is (2E,6E)-farnesyl diphosphate = beta-maaliene + diphosphate. It catalyses the reaction (2E,6E)-farnesyl diphosphate = aristolene + diphosphate. It carries out the reaction (2E,6E)-farnesyl diphosphate = calarene + diphosphate. The enzyme catalyses (2E)-geranyl diphosphate = (E)-beta-ocimene + diphosphate. The catalysed reaction is (2E)-geranyl diphosphate = (Z)-beta-ocimene + diphosphate. It catalyses the reaction (2E)-geranyl diphosphate + H2O = linalool + diphosphate. It carries out the reaction (2E)-geranyl diphosphate = beta-myrcene + diphosphate. Functionally, terpene synthase that converts its substrate farnesyl diphosphate (FPP) into an unidentified sesquiterpene as a major product, as well as beta-maaliene, aristolene, calarene and 2 additional unidentified sesquiterpene as minor products. Is also able to convert geranyl diphosphate (GPP) into a mixture of monoterpenes including (Z)-beta-ocimene, (E)-beta-ocimene, allo-ocimene, linalool and beta-myrcene. This Dictyostelium discoideum (Social amoeba) protein is Terpene synthase 3.